The primary structure comprises 252 residues: Imidazole glycerol phosphate synthase subunit HisF (252 aa).

Active-site residues include aspartate 11 and aspartate 130.

It belongs to the HisA/HisF family. Heterodimer of HisH and HisF.

The protein localises to the cytoplasm. It catalyses the reaction 5-[(5-phospho-1-deoxy-D-ribulos-1-ylimino)methylamino]-1-(5-phospho-beta-D-ribosyl)imidazole-4-carboxamide + L-glutamine = D-erythro-1-(imidazol-4-yl)glycerol 3-phosphate + 5-amino-1-(5-phospho-beta-D-ribosyl)imidazole-4-carboxamide + L-glutamate + H(+). Its pathway is amino-acid biosynthesis; L-histidine biosynthesis; L-histidine from 5-phospho-alpha-D-ribose 1-diphosphate: step 5/9. In terms of biological role, IGPS catalyzes the conversion of PRFAR and glutamine to IGP, AICAR and glutamate. The HisF subunit catalyzes the cyclization activity that produces IGP and AICAR from PRFAR using the ammonia provided by the HisH subunit. This is Imidazole glycerol phosphate synthase subunit HisF from Alkaliphilus metalliredigens (strain QYMF).